The primary structure comprises 771 residues: Solute carrier family 7 member 14 (771 aa).

The next 6 helical transmembrane spans lie at 58–78 (LISL…SGLV), 83–103 (AGPG…LSGV), 119–141 (AYTY…NLIL), 187–207 (YPDL…ALGV), 216–236 (VLNV…LFFI), and 251–271 (WSGV…FDII). N-linked (GlcNAc...) asparagine glycosylation is present at Asn-282. A run of 4 helical transmembrane segments spans residues 291–311 (ASLV…TLMV), 336–356 (FVVA…SLFP), 384–404 (PVVA…LVSL), and 407–427 (LIEM…VCVL). Ser-465, Ser-468, Ser-475, and Ser-488 each carry phosphoserine. A run of 4 helical transmembrane segments spans residues 565–585 (VTIC…FIIF), 596–616 (WAIL…FVIL), 628–648 (MAPC…YLML), and 655–675 (WIRF…YGIW). Asn-676 carries N-linked (GlcNAc...) asparagine glycosylation. Residues 735-771 (SDAKANSRTSSKAKSKSKHKQNSEALIANDELDCSPE) are disordered. The span at 745-754 (SKAKSKSKHK) shows a compositional bias: basic residues. 2 positions are modified to phosphoserine: Ser-757 and Ser-769.

This sequence belongs to the amino acid-polyamine-organocation (APC) superfamily. Expressed in retina, brain and spinal cord. In the retina, expressed in the inner nuclear layer and photoreceptor layer (at protein level). Expressed in liver, spleen, lung, kidney intestine and brain (at protein level).

Its subcellular location is the lysosome membrane. The enzyme catalyses 4-aminobutanoate(in) = 4-aminobutanoate(out). In terms of biological role, imports 4-aminobutanoate (GABA) into lysosomes. May act as a GABA sensor that regulates mTORC2-dependent INS signaling and gluconeogenesis. The transport mechanism and substrate selectivity remain to be elucidated. This chain is Solute carrier family 7 member 14, found in Mus musculus (Mouse).